The primary structure comprises 229 residues: UPF0173 metal-dependent hydrolase Hbut_0886 (229 aa).

This sequence belongs to the UPF0173 family.

The chain is UPF0173 metal-dependent hydrolase Hbut_0886 from Hyperthermus butylicus (strain DSM 5456 / JCM 9403 / PLM1-5).